Reading from the N-terminus, the 171-residue chain is UPF0316 protein EAT1b_0871 (171 aa).

Helical transmembrane passes span 4–24 (ILLILLLQLIYVPVLTLRTIM), 32–52 (IAGLFGTLETLIYIFALGIVF), and 57–77 (TVGMIVYAVGFGLGILLGGFV).

Belongs to the UPF0316 family.

It localises to the cell membrane. The sequence is that of UPF0316 protein EAT1b_0871 from Exiguobacterium sp. (strain ATCC BAA-1283 / AT1b).